Here is a 378-residue protein sequence, read N- to C-terminus: tRNA-specific 2-thiouridylase MnmA (378 aa).

Residues 9–16 and methionine 35 contribute to the ATP site; that span reads GVSGGVDS. Positions 94–96 are interaction with target base in tRNA; it reads NPD. Catalysis depends on cysteine 99, which acts as the Nucleophile. Cysteine 99 and cysteine 195 are oxidised to a cystine. Residue glycine 123 participates in ATP binding. Positions 145 to 147 are interaction with tRNA; it reads KDQ. The active-site Cysteine persulfide intermediate is the cysteine 195. An interaction with tRNA region spans residues 307-308; that stretch reads RY.

This sequence belongs to the MnmA/TRMU family.

It localises to the cytoplasm. It catalyses the reaction S-sulfanyl-L-cysteinyl-[protein] + uridine(34) in tRNA + AH2 + ATP = 2-thiouridine(34) in tRNA + L-cysteinyl-[protein] + A + AMP + diphosphate + H(+). Functionally, catalyzes the 2-thiolation of uridine at the wobble position (U34) of tRNA, leading to the formation of s(2)U34. This Xanthomonas euvesicatoria pv. vesicatoria (strain 85-10) (Xanthomonas campestris pv. vesicatoria) protein is tRNA-specific 2-thiouridylase MnmA.